A 474-amino-acid polypeptide reads, in one-letter code: Replication-associated protein (474 aa).

Positions 248–255 (GKRFQEDR) match the Nuclear localization signal motif. Residues 455 to 474 (AFAPGFSLTSEPEPKRRRFF) form a disordered region.

It is found in the host nucleus. Functionally, plays an essential for the replication of viral DNA. Presumably cleaves viral genomic dsRNA replicative form to initiate rolling circle replication. This is Replication-associated protein from Avon-Heathcote Estuary associated kieseladnavirus (AHEaBV).